The sequence spans 455 residues: tRNA modification GTPase MnmE (455 aa).

(6S)-5-formyl-5,6,7,8-tetrahydrofolate is bound by residues R26, E86, and R125. A TrmE-type G domain is found at G222 to F376. N232 contributes to the K(+) binding site. Residues N232–S237, T251–T257, and D276–G279 each bind GTP. S236 provides a ligand contact to Mg(2+). 3 residues coordinate K(+): T251, I253, and T256. T257 is a Mg(2+) binding site. Position 455 (K455) interacts with (6S)-5-formyl-5,6,7,8-tetrahydrofolate.

It belongs to the TRAFAC class TrmE-Era-EngA-EngB-Septin-like GTPase superfamily. TrmE GTPase family. Homodimer. Heterotetramer of two MnmE and two MnmG subunits. K(+) serves as cofactor.

The protein resides in the cytoplasm. Its function is as follows. Exhibits a very high intrinsic GTPase hydrolysis rate. Involved in the addition of a carboxymethylaminomethyl (cmnm) group at the wobble position (U34) of certain tRNAs, forming tRNA-cmnm(5)s(2)U34. This Lactococcus lactis subsp. cremoris (strain MG1363) protein is tRNA modification GTPase MnmE.